Here is a 108-residue protein sequence, read N- to C-terminus: Abscisic stress-ripening protein 3 (108 aa).

Disordered regions lie at residues 1-34 (MAEEKQHHRLFHHKNREEEGGPVDHKKKVKHHSH) and 84-108 (FAFHEHHQKKEAKKEKKAAEKGRHH). Basic and acidic residues predominate over residues 15–24 (NREEEGGPVD). Over residues 25-34 (HKKKVKHHSH) the composition is skewed to basic residues. The span at 95 to 108 (AKKEKKAAEKGRHH) shows a compositional bias: basic and acidic residues.

The protein belongs to the abscisic acid and water stress-induced protein family.

The chain is Abscisic stress-ripening protein 3 from Solanum lycopersicum (Tomato).